The following is a 264-amino-acid chain: NAD kinase 1 (264 aa).

The active-site Proton acceptor is D45. NAD(+) is bound by residues 45-46, 122-123, R148, D150, 161-166, and A185; these read DG, NE, and TAYNKS.

It belongs to the NAD kinase family. Requires a divalent metal cation as cofactor.

The protein localises to the cytoplasm. It catalyses the reaction NAD(+) + ATP = ADP + NADP(+) + H(+). Involved in the regulation of the intracellular balance of NAD and NADP, and is a key enzyme in the biosynthesis of NADP. Catalyzes specifically the phosphorylation on 2'-hydroxyl of the adenosine moiety of NAD to yield NADP. This Listeria monocytogenes serotype 4b (strain F2365) protein is NAD kinase 1.